We begin with the raw amino-acid sequence, 259 residues long: UPF0246 protein PP_1289 (259 aa).

This sequence belongs to the UPF0246 family.

The protein is UPF0246 protein PP_1289 of Pseudomonas putida (strain ATCC 47054 / DSM 6125 / CFBP 8728 / NCIMB 11950 / KT2440).